Reading from the N-terminus, the 560-residue chain is Mitochondria-eating protein (560 aa).

The interaction with YWHAG/14-3-3 protein gamma stretch occupies residues 1–294; sequence MADNLRKLVS…SHSRNHSRSR (294 aa). A phosphoserine mark is found at Ser13, Ser85, Ser156, and Ser159. Coiled coils occupy residues 118–186 and 223–248; these read DRNI…SRHR and DYEK…LQGR. 2 disordered regions span residues 178–217 and 243–316; these read QAQE…AQRK and SVLQ…AKLS. Over residues 181–209 the composition is skewed to basic and acidic residues; it reads EESRHRPPEHRSSEKRGSERRRVEPRGAD. Residues 248 to 262 show a composition bias toward low complexity; it reads RSTRSRSPSPASCSR. Positions 263–293 are enriched in basic residues; sequence SRSHSHSRSRSHSHSRSGSHSRSHSRNHSRS. Residues 300–310 show a composition bias toward polar residues; sequence TAVSGVRSPSP. A phosphoserine mark is found at Ser307, Ser309, and Ser531.

It belongs to the MIEAP family. Interacts (via coiled-coil domains) with BNIP3L (via BH3 domain). Interacts (via coiled-coil domains) with BNIP3 (via BH3 domain). Interacts with YWHAG/14-3-3 protein gamma; a protein that also plays a role in MALM.

The protein resides in the cytoplasm. The protein localises to the cytosol. It is found in the mitochondrion outer membrane. Its subcellular location is the mitochondrion matrix. Key regulator of mitochondrial quality that mediates the repairing or degradation of unhealthy mitochondria in response to mitochondrial damage. Mediator of mitochondrial protein catabolic process (also named MALM) by mediating the degradation of damaged proteins inside mitochondria by promoting the accumulation in the mitochondrial matrix of hydrolases that are characteristic of the lysosomal lumen. Also involved in mitochondrion degradation of damaged mitochondria by promoting the formation of vacuole-like structures (named MIV), which engulf and degrade unhealthy mitochondria by accumulating lysosomes. The physical interaction of SPATA18/MIEAP, BNIP3 and BNIP3L/NIX at the mitochondrial outer membrane regulates the opening of a pore in the mitochondrial double membrane in order to mediate the translocation of lysosomal proteins from the cytoplasm to the mitochondrial matrix. Binds cardiolipin. May form molecular condensates (non-membrane-bounded organelles) within mitochondria that compartmentalize and promote cardiolipin metabolism. In Sus scrofa (Pig), this protein is Mitochondria-eating protein (SPATA18).